The chain runs to 583 residues: SHC-transforming protein 1 (583 aa).

N-acetylmethionine is present on M1. Positions 1–92 are disordered; that stretch reads MDLLPPKPKY…EPGRAADDGE (92 aa). The segment covering 16–44 has biased composition (low complexity); that stretch reads ESLSSLEEGASGSTPPEELPSPSASSLGP. Phosphoserine is present on residues S36 and S139. Residue K154 is modified to N6-acetyllysine. The PID domain maps to 156–339; the sequence is MGPGVSYLVR…AGFDGSAWDE (184 aa). Positions 340 to 487 are CH1; it reads EEEEPPDHQY…SMAEQLRGEP (148 aa). Phosphotyrosine is present on residues Y349 and Y350. Low complexity predominate over residues 372–384; it reads AAPGAARPTAPNA. Residues 372 to 415 form a disordered region; it reads AAPGAARPTAPNAQTPSHLGATLPVGQPVGGDPEVRKQMPPPPP. At Y427 the chain carries Phosphotyrosine. S453 is modified (phosphoserine). Residues 488-579 form the SH2 domain; that stretch reads WFHGKLSRRE…GSELCLQQPV (92 aa).

Interacts with CPNE3; this interaction may mediate the binding of CPNE3 with ERBB2. Interacts with the NPXY motif of tyrosine-phosphorylated IGF1R and INSR in vitro via the PID domain. Once activated, binds to GRB2. Interacts with tyrosine-phosphorylated CD3T and DDR2. Interacts with the N-terminal region of SH2B2. Interacts with phosphorylated LRP1 and IRS4. Interacts with INPP5D/SHIP1 and INPPL1/SHIP2. Interacts with TRIM31. Interacts with PTPN6/SHP (tyrosine phosphorylated). Identified in a complex containing FGFR4, NCAM1, CDH2, PLCG1, FRS2, SRC, SHC1, GAP43 and CTT. Interacts with ALK, GAB2, GRB7 and KIT. Interacts with FLT4 (tyrosine-phosphorylated). Interacts with EPHB1 and GRB2; activates the MAPK/ERK cascade to regulate cell migration. Interacts with PDGFRB (tyrosine-phosphorylated). Interacts with ERBB4. Interacts with TEK/TIE2 (tyrosine-phosphorylated). Interacts with the Trk receptors NTRK1, NTRK2 and NTRK3; in a phosphotyrosine-dependent manner. Interacts with PTK2/FAK1. Interacts with CEACAM1; this interaction is CEACAM1-phosphorylation-dependent and mediates interaction with EGFR or INSR resulting in decrease coupling of SHC1 to the MAPK3/ERK1-MAPK1/ERK2 pathway. Interacts (via PID domain) with PEAK1 (when phosphorylated at 'Tyr-1188'). Found in a complex with PPP1CA, PPP1CC, SHC1 and PEAK1. As to quaternary structure, (Microbial infection) Interacts with herpes simplex virus 1 UL46. In terms of processing, phosphorylated by activated epidermal growth factor receptor. Phosphorylated in response to FLT4 and KIT signaling. Isoform p46Shc and isoform p52Shc are phosphorylated on tyrosine residues of the Pro-rich domain. Isoform p66Shc is phosphorylated on Ser-36 by PRKCB upon treatment with insulin, hydrogen peroxide or irradiation with ultraviolet light. Tyrosine phosphorylated in response to FLT3 signaling. Tyrosine phosphorylated by activated PTK2B/PYK2. Tyrosine phosphorylated by ligand-activated ALK. Tyrosine phosphorylated by ligand-activated PDGFRB. Tyrosine phosphorylated by TEK/TIE2. May be tyrosine phosphorylated by activated PTK2/FAK1; tyrosine phosphorylation was seen in an astrocytoma biopsy, where PTK2/FAK1 kinase activity is high, but not in normal brain tissue. Isoform p52Shc dephosphorylation by PTPN2 may regulate interaction with GRB2. Widely expressed. Expressed in neural stem cells but absent in mature neurons.

It is found in the cytoplasm. The protein localises to the cell junction. Its subcellular location is the focal adhesion. It localises to the mitochondrion matrix. The protein resides in the mitochondrion. Signaling adapter that couples activated growth factor receptors to signaling pathways. Participates in a signaling cascade initiated by activated KIT and KITLG/SCF. Isoform p46Shc and isoform p52Shc, once phosphorylated, couple activated receptor tyrosine kinases to Ras via the recruitment of the GRB2/SOS complex and are implicated in the cytoplasmic propagation of mitogenic signals. Isoform p46Shc and isoform p52Shc may thus function as initiators of the Ras signaling cascade in various non-neuronal systems. Isoform p66Shc does not mediate Ras activation, but is involved in signal transduction pathways that regulate the cellular response to oxidative stress and life span. Isoform p66Shc acts as a downstream target of the tumor suppressor p53 and is indispensable for the ability of stress-activated p53 to induce elevation of intracellular oxidants, cytochrome c release and apoptosis. The expression of isoform p66Shc has been correlated with life span. Participates in signaling downstream of the angiopoietin receptor TEK/TIE2, and plays a role in the regulation of endothelial cell migration and sprouting angiogenesis. The sequence is that of SHC-transforming protein 1 (SHC1) from Homo sapiens (Human).